Here is a 236-residue protein sequence, read N- to C-terminus: 2,3,4,5-tetrahydropyridine-2,6-dicarboxylate N-acetyltransferase (236 aa).

This sequence belongs to the transferase hexapeptide repeat family. DapH subfamily.

It carries out the reaction (S)-2,3,4,5-tetrahydrodipicolinate + acetyl-CoA + H2O = L-2-acetamido-6-oxoheptanedioate + CoA. The protein operates within amino-acid biosynthesis; L-lysine biosynthesis via DAP pathway; LL-2,6-diaminopimelate from (S)-tetrahydrodipicolinate (acetylase route): step 1/3. Catalyzes the transfer of an acetyl group from acetyl-CoA to tetrahydrodipicolinate. The chain is 2,3,4,5-tetrahydropyridine-2,6-dicarboxylate N-acetyltransferase from Bacillus subtilis (strain 168).